We begin with the raw amino-acid sequence, 238 residues long: Ribonuclease PH (238 aa).

Phosphate-binding positions include Arg-86 and 124 to 126; that span reads GTR.

Belongs to the RNase PH family. As to quaternary structure, homohexameric ring arranged as a trimer of dimers.

The catalysed reaction is tRNA(n+1) + phosphate = tRNA(n) + a ribonucleoside 5'-diphosphate. Functionally, phosphorolytic 3'-5' exoribonuclease that plays an important role in tRNA 3'-end maturation. Removes nucleotide residues following the 3'-CCA terminus of tRNAs; can also add nucleotides to the ends of RNA molecules by using nucleoside diphosphates as substrates, but this may not be physiologically important. Probably plays a role in initiation of 16S rRNA degradation (leading to ribosome degradation) during starvation. The sequence is that of Ribonuclease PH from Haemophilus ducreyi (strain 35000HP / ATCC 700724).